The chain runs to 417 residues: MLEQMGAAAKAASYKLALLSSREKNRVLEKIADYLEGQSEQILLANEQDLAEARANGLSDAMLDRLALNPARLKSIADDVRQVCNLADPVGQVIDGGLLDSGLRLERRRVPLGVVGVIYEARPNVTVDVASLCLKTGNAAILRGGKETWRTNAATVKVIQQALEECGLPAGAVQAIESPDRALVNEMLRMDKYIDMLIPRGGAGLHKLCREQSTIPVITGGIGVCHIVVDDSAEIEPALKIIVNAKTQRPSTCNTVETLLVHQDIADTFLPALSQQMAESGVTLHADPRALALLQDGPAKVEAVKSEQYDDEYLSLDLNVKVVADLDDAIAHIREHGTQHSDAILTRKLSHGNRFINEVDSSAVYVNASTRFTDGGQFGLGAEVAVSTQKLHARGPMGLEALTTYKWIGYGDDTIRA.

This sequence belongs to the gamma-glutamyl phosphate reductase family.

It is found in the cytoplasm. It carries out the reaction L-glutamate 5-semialdehyde + phosphate + NADP(+) = L-glutamyl 5-phosphate + NADPH + H(+). It functions in the pathway amino-acid biosynthesis; L-proline biosynthesis; L-glutamate 5-semialdehyde from L-glutamate: step 2/2. Functionally, catalyzes the NADPH-dependent reduction of L-glutamate 5-phosphate into L-glutamate 5-semialdehyde and phosphate. The product spontaneously undergoes cyclization to form 1-pyrroline-5-carboxylate. This chain is Gamma-glutamyl phosphate reductase, found in Enterobacter sp. (strain 638).